A 733-amino-acid polypeptide reads, in one-letter code: Phosphoribosylformylglycinamidine synthase subunit PurL (733 aa).

Residue H42 is part of the active site. The ATP site is built by Y45 and K84. E86 contacts Mg(2+). Residues 87–90 and R109 contribute to the substrate site; that span reads SHNH. The active-site Proton acceptor is the H88. D110 is a Mg(2+) binding site. Q233 contacts substrate. D261 serves as a coordination point for Mg(2+). Substrate is bound at residue 305 to 307; sequence ESQ. Residues D489 and G526 each coordinate ATP. N527 lines the Mg(2+) pocket. S529 is a substrate binding site.

Belongs to the FGAMS family. As to quaternary structure, monomer. Part of the FGAM synthase complex composed of 1 PurL, 1 PurQ and 2 PurS subunits.

The protein resides in the cytoplasm. The catalysed reaction is N(2)-formyl-N(1)-(5-phospho-beta-D-ribosyl)glycinamide + L-glutamine + ATP + H2O = 2-formamido-N(1)-(5-O-phospho-beta-D-ribosyl)acetamidine + L-glutamate + ADP + phosphate + H(+). Its pathway is purine metabolism; IMP biosynthesis via de novo pathway; 5-amino-1-(5-phospho-D-ribosyl)imidazole from N(2)-formyl-N(1)-(5-phospho-D-ribosyl)glycinamide: step 1/2. In terms of biological role, part of the phosphoribosylformylglycinamidine synthase complex involved in the purines biosynthetic pathway. Catalyzes the ATP-dependent conversion of formylglycinamide ribonucleotide (FGAR) and glutamine to yield formylglycinamidine ribonucleotide (FGAM) and glutamate. The FGAM synthase complex is composed of three subunits. PurQ produces an ammonia molecule by converting glutamine to glutamate. PurL transfers the ammonia molecule to FGAR to form FGAM in an ATP-dependent manner. PurS interacts with PurQ and PurL and is thought to assist in the transfer of the ammonia molecule from PurQ to PurL. The protein is Phosphoribosylformylglycinamidine synthase subunit PurL of Moorella thermoacetica (strain ATCC 39073 / JCM 9320).